Consider the following 1383-residue polypeptide: DNA-directed RNA polymerase subunit beta (1383 aa).

The protein belongs to the RNA polymerase beta chain family. The RNAP catalytic core consists of 2 alpha, 1 beta, 1 beta' and 1 omega subunit. When a sigma factor is associated with the core the holoenzyme is formed, which can initiate transcription.

It catalyses the reaction RNA(n) + a ribonucleoside 5'-triphosphate = RNA(n+1) + diphosphate. In terms of biological role, DNA-dependent RNA polymerase catalyzes the transcription of DNA into RNA using the four ribonucleoside triphosphates as substrates. This Anaplasma phagocytophilum (strain HZ) protein is DNA-directed RNA polymerase subunit beta.